Reading from the N-terminus, the 385-residue chain is Citrate synthase (385 aa).

Catalysis depends on residues histidine 223, histidine 263, and aspartate 318.

It belongs to the citrate synthase family. As to quaternary structure, homodimer.

The catalysed reaction is oxaloacetate + acetyl-CoA + H2O = citrate + CoA + H(+). It participates in carbohydrate metabolism; tricarboxylic acid cycle; isocitrate from oxaloacetate: step 1/2. Allosterically inhibited by NADH. In Thermoplasma acidophilum (strain ATCC 25905 / DSM 1728 / JCM 9062 / NBRC 15155 / AMRC-C165), this protein is Citrate synthase (gltA).